The primary structure comprises 264 residues: Phosphonoacetaldehyde hydrolase (264 aa).

The Nucleophile role is filled by Asp-9. Asp-9 and Ala-11 together coordinate Mg(2+). The active-site Schiff-base intermediate with substrate is the Lys-50. Asp-183 serves as a coordination point for Mg(2+).

This sequence belongs to the HAD-like hydrolase superfamily. PhnX family. As to quaternary structure, homodimer. The cofactor is Mg(2+).

The catalysed reaction is phosphonoacetaldehyde + H2O = acetaldehyde + phosphate + H(+). Its function is as follows. Involved in phosphonate degradation. This chain is Phosphonoacetaldehyde hydrolase, found in Bacillus cereus (strain B4264).